The following is a 214-amino-acid chain: Alkaline phosphatase-like protein (214 aa).

4 helical membrane passes run 3–23 (EIII…LIMI), 48–68 (LGII…ALIL), 141–161 (FLIL…SLGA), and 177–197 (YSSV…LLFV).

The protein belongs to the DedA family.

It localises to the cell membrane. The polypeptide is Alkaline phosphatase-like protein (apl) (Lactococcus lactis subsp. cremoris (strain MG1363)).